The chain runs to 443 residues: Gasdermin-A2 (443 aa).

Residues 1–249 (MSMFEDVTRA…QGSTVQMISG (249 aa)) form a triggers pyroptosis region. 9 to 13 (RALAR) provides a ligand contact to a cardiolipin. 4 beta stranded membrane passes run 78-95 (NFSFKNMLDVRVEGDVEV), 99-120 (MKVKGTVGLSQSSTLEVQMLSV), 164-179 (VTLKRASNAISKFSLN), and 183-197 (LGLQGSVNHKEAVTI). Residues 249–312 (GEMHEDFKTL…GALDKGHEVT (64 aa)) adopt a coiled-coil conformation.

The protein belongs to the gasdermin family. In terms of assembly, homooligomer; homooligomeric ring-shaped pore complex containing 18-36 subunits when inserted in the membrane. In terms of processing, cleavage relieves autoinhibition by releasing the N-terminal moiety (Gasdermin-A2, N-terminal) that initiates pyroptosis. In contrast to Gsdma, not cleaved by bacterial effector protein SpeB. Post-translationally, palmitoylated. Expressed in the gastrointestinal tract, specifically from the middle to the upper region of the gastric mucosa in the glandular stomach.

The protein localises to the cytoplasm. Its subcellular location is the perinuclear region. The protein resides in the cytosol. It localises to the cell membrane. Its activity is regulated as follows. The full-length protein before cleavage is inactive: intramolecular interactions between N- and C-terminal domains mediate autoinhibition in the absence of activation signal. The intrinsic pyroptosis-inducing activity is carried by the released N-terminal moiety (Gasdermin-A2, N-terminal). Functionally, this form constitutes the precursor of the pore-forming protein and acts as a sensor of infection: upon bacterial infection, specifically cleaved by some bacterial effector protein, releasing the N-terminal moiety (Gasdermin-A2, N-terminal) that binds to membranes and forms pores, triggering pyroptosis. Its function is as follows. Pore-forming protein that causes membrane permeabilization and pyroptosis. Released upon cleavage of Gasdermin-A2, and binds to membrane inner leaflet lipids. Homooligomerizes within the membrane and forms pores of 10-15 nanometers (nm) of inner diameter, triggering pyroptosis. Binds to membrane inner leaflet lipids, such as phosphatidylinositol (4,5)-bisphosphate. The sequence is that of Gasdermin-A2 from Mus musculus (Mouse).